The following is a 1334-amino-acid chain: CRISPR-associated endonuclease Cas9 (1334 aa).

Asp-10 functions as the For RuvC-like nuclease domain in the catalytic mechanism. Residues Asp-10, Glu-765, and Glu-769 each coordinate Mn(2+). An HNH Cas9-type domain is found at 773 to 924 (TGKGKNNSRP…DKARFIHRQL (152 aa)). His-843 serves as the catalytic Proton acceptor for HNH nuclease domain. His-986 contributes to the Mn(2+) binding site.

It belongs to the CRISPR-associated protein Cas9 family. Subtype II-A subfamily. As to quaternary structure, monomer. Binds crRNA and tracrRNA. Requires Mg(2+) as cofactor.

CRISPR (clustered regularly interspaced short palindromic repeat) is an adaptive immune system that provides protection against mobile genetic elements (viruses, transposable elements and conjugative plasmids). CRISPR clusters contain spacers, sequences complementary to antecedent mobile elements, and target invading nucleic acids. CRISPR clusters are transcribed and processed into CRISPR RNA (crRNA). In type II CRISPR systems correct processing of pre-crRNA requires a trans-encoded small RNA (tracrRNA), endogenous ribonuclease 3 (rnc) and this protein. The tracrRNA serves as a guide for ribonuclease 3-aided processing of pre-crRNA. Subsequently Cas9/crRNA/tracrRNA endonucleolytically cleaves linear or circular dsDNA target complementary to the spacer; Cas9 is inactive in the absence of the 2 guide RNAs (gRNA). Cas9 recognizes the protospacer adjacent motif (PAM) in the CRISPR repeat sequences to help distinguish self versus nonself, as targets within the bacterial CRISPR locus do not have PAMs. PAM recognition is also required for catalytic activity. The protein is CRISPR-associated endonuclease Cas9 of Listeria innocua serovar 6a (strain ATCC BAA-680 / CLIP 11262).